A 126-amino-acid polypeptide reads, in one-letter code: Histone H2B type 1-D (126 aa).

The span at 1-12 (MPEPTKSAPAPK) shows a compositional bias: low complexity. A disordered region spans residues 1–36 (MPEPTKSAPAPKKGSKKAVTKAQKKDGKKRKRSRKE). Pro2 is subject to N-acetylproline. Glu3 is modified (ADP-ribosyl glutamic acid). At Lys6 the chain carries N6-(2-hydroxyisobutyryl)lysine; alternate. An N6-(beta-hydroxybutyryl)lysine; alternate modification is found at Lys6. Lys6 carries the N6-acetyllysine; alternate modification. Lys6 is modified (N6-butyryllysine; alternate). Lys6 is modified (N6-crotonyllysine; alternate). An N6-lactoyllysine; alternate modification is found at Lys6. Lys6 participates in a covalent cross-link: Glycyl lysine isopeptide (Lys-Gly) (interchain with G-Cter in SUMO2); alternate. Ser7 bears the ADP-ribosylserine mark. Position 12 is an N6-(beta-hydroxybutyryl)lysine; alternate (Lys12). N6-acetyllysine; alternate occurs at positions 12 and 13. Residues Lys12 and Lys13 each carry the N6-crotonyllysine; alternate modification. Lys12 carries the post-translational modification N6-lactoyllysine; alternate. Lys13 carries the N6-(2-hydroxyisobutyryl)lysine; alternate modification. Phosphoserine; by STK4/MST1 is present on Ser15. An N6-acetyllysine; alternate mark is found at Lys16, Lys17, Lys21, and Lys24. N6-crotonyllysine; alternate is present on residues Lys16, Lys17, Lys21, and Lys24. N6-lactoyllysine; alternate occurs at positions 16, 17, 21, and 24. Lys17 and Lys21 each carry N6-(beta-hydroxybutyryl)lysine; alternate. At Lys17 the chain carries N6-glutaryllysine; alternate. Residues Lys21 and Lys24 each carry the N6-(2-hydroxyisobutyryl)lysine; alternate modification. Residue Lys21 is modified to N6-butyryllysine; alternate. Residue Lys21 forms a Glycyl lysine isopeptide (Lys-Gly) (interchain with G-Cter in SUMO2); alternate linkage. An N6-(2-hydroxyisobutyryl)lysine modification is found at Lys25. Residue Lys35 is modified to N6-(2-hydroxyisobutyryl)lysine; alternate. Lys35 is modified (N6-(beta-hydroxybutyryl)lysine; alternate). N6-crotonyllysine; alternate is present on Lys35. N6-glutaryllysine; alternate is present on Lys35. Position 35 is an N6-succinyllysine; alternate (Lys35). Residue Lys35 forms a Glycyl lysine isopeptide (Lys-Gly) (interchain with G-Cter in ubiquitin); alternate linkage. At Glu36 the chain carries PolyADP-ribosyl glutamic acid. Residue Ser37 is modified to Phosphoserine; by AMPK. N6-(2-hydroxyisobutyryl)lysine; alternate occurs at positions 44, 47, and 58. Lys44 bears the N6-lactoyllysine; alternate mark. 2 positions are modified to N6-glutaryllysine; alternate: Lys44 and Lys47. Lys47 is subject to N6-methyllysine; alternate. Lys58 is modified (N6,N6-dimethyllysine; alternate). Arg80 bears the Dimethylated arginine mark. Residue Lys86 is modified to N6-(2-hydroxyisobutyryl)lysine; alternate. Position 86 is an N6-(beta-hydroxybutyryl)lysine; alternate (Lys86). Lys86 carries the N6-acetyllysine; alternate modification. The residue at position 86 (Lys86) is an N6-lactoyllysine; alternate. Lys86 is modified (N6,N6,N6-trimethyllysine; alternate). Residues Arg87 and Arg93 each carry the omega-N-methylarginine modification. Lys109 bears the N6-(2-hydroxyisobutyryl)lysine; alternate mark. At Lys109 the chain carries N6-lactoyllysine; alternate. Lys109 bears the N6-glutaryllysine; alternate mark. Lys109 carries the post-translational modification N6-methyllysine; alternate. O-linked (GlcNAc) serine glycosylation is present at Ser113. Phosphothreonine is present on Thr116. An N6-(2-hydroxyisobutyryl)lysine; alternate mark is found at Lys117 and Lys121. N6-(beta-hydroxybutyryl)lysine; alternate is present on residues Lys117 and Lys121. Lys117 and Lys121 each carry N6-lactoyllysine; alternate. An N6-glutaryllysine; alternate mark is found at Lys117 and Lys121. N6-succinyllysine; alternate is present on residues Lys117 and Lys121. Residue Lys117 is modified to N6-malonyllysine; alternate. At Lys117 the chain carries N6-methylated lysine; alternate. Lys121 participates in a covalent cross-link: Glycyl lysine isopeptide (Lys-Gly) (interchain with G-Cter in ubiquitin); alternate.

This sequence belongs to the histone H2B family. In terms of assembly, the nucleosome is a histone octamer containing two molecules each of H2A, H2B, H3 and H4 assembled in one H3-H4 heterotetramer and two H2A-H2B heterodimers. The octamer wraps approximately 147 bp of DNA. Post-translationally, monoubiquitination at Lys-35 (H2BK34Ub) by the MSL1/MSL2 dimer is required for histone H3 'Lys-4' (H3K4me) and 'Lys-79' (H3K79me) methylation and transcription activation at specific gene loci, such as HOXA9 and MEIS1 loci. Similarly, monoubiquitination at Lys-121 (H2BK120Ub) by the RNF20/40 complex gives a specific tag for epigenetic transcriptional activation and is also prerequisite for histone H3 'Lys-4' and 'Lys-79' methylation. It also functions cooperatively with the FACT dimer to stimulate elongation by RNA polymerase II. H2BK120Ub also acts as a regulator of mRNA splicing: deubiquitination by USP49 is required for efficient cotranscriptional splicing of a large set of exons. In terms of processing, phosphorylation at Ser-37 (H2BS36ph) by AMPK in response to stress promotes transcription. Phosphorylated on Ser-15 (H2BS14ph) by STK4/MST1 during apoptosis; which facilitates apoptotic chromatin condensation. Also phosphorylated on Ser-15 in response to DNA double strand breaks (DSBs), and in correlation with somatic hypermutation and immunoglobulin class-switch recombination. GlcNAcylation at Ser-113 promotes monoubiquitination of Lys-121. It fluctuates in response to extracellular glucose, and associates with transcribed genes. Post-translationally, ADP-ribosylated by PARP1 or PARP2 on Ser-7 (H2BS6ADPr) in response to DNA damage. H2BS6ADPr promotes recruitment of CHD1L. Mono-ADP-ribosylated on Glu-3 (H2BE2ADPr) by PARP3 in response to single-strand breaks. Poly ADP-ribosylation on Glu-36 (H2BE35ADPr) by PARP1 regulates adipogenesis: it inhibits phosphorylation at Ser-37 (H2BS36ph), thereby blocking expression of pro-adipogenetic genes. In terms of processing, crotonylation (Kcr) is specifically present in male germ cells and marks testis-specific genes in post-meiotic cells, including X-linked genes that escape sex chromosome inactivation in haploid cells. Crotonylation marks active promoters and enhancers and confers resistance to transcriptional repressors. It is also associated with post-meiotically activated genes on autosomes. Lactylated in macrophages by EP300/P300 by using lactoyl-CoA directly derived from endogenous or exogenous lactate, leading to stimulates gene transcription.

It localises to the nucleus. Its subcellular location is the chromosome. In terms of biological role, core component of nucleosome. Nucleosomes wrap and compact DNA into chromatin, limiting DNA accessibility to the cellular machineries which require DNA as a template. Histones thereby play a central role in transcription regulation, DNA repair, DNA replication and chromosomal stability. DNA accessibility is regulated via a complex set of post-translational modifications of histones, also called histone code, and nucleosome remodeling. This is Histone H2B type 1-D from Homo sapiens (Human).